We begin with the raw amino-acid sequence, 302 residues long: ATP synthase gamma chain (302 aa).

This sequence belongs to the ATPase gamma chain family. As to quaternary structure, F-type ATPases have 2 components, CF(1) - the catalytic core - and CF(0) - the membrane proton channel. CF(1) has five subunits: alpha(3), beta(3), gamma(1), delta(1), epsilon(1). CF(0) has three main subunits: a, b and c.

Its subcellular location is the cell membrane. Its function is as follows. Produces ATP from ADP in the presence of a proton gradient across the membrane. The gamma chain is believed to be important in regulating ATPase activity and the flow of protons through the CF(0) complex. The sequence is that of ATP synthase gamma chain from Enterococcus faecalis (strain ATCC 700802 / V583).